Consider the following 151-residue polypeptide: Large ribosomal subunit protein uL13 (151 aa).

A disordered region spans residues 129 to 151; sequence PTHPHDAQKPKELNINTIPGAES. Basic and acidic residues predominate over residues 131-140; that stretch reads HPHDAQKPKE.

Belongs to the universal ribosomal protein uL13 family. Part of the 50S ribosomal subunit.

In terms of biological role, this protein is one of the early assembly proteins of the 50S ribosomal subunit, although it is not seen to bind rRNA by itself. It is important during the early stages of 50S assembly. This Trichormus variabilis (strain ATCC 29413 / PCC 7937) (Anabaena variabilis) protein is Large ribosomal subunit protein uL13.